Reading from the N-terminus, the 360-residue chain is Sensor histidine kinase LiaS (360 aa).

The Cytoplasmic segment spans residues 1–15 (MRKKMLASLQWRAIR). The helical transmembrane segment at 16-36 (MTTGISLLLFVCLISFMMFYY) threads the bilayer. Residues 37–47 (RLDPLVLLSSS) lie on the Extracellular side of the membrane. Residues 48–68 (WFGIPFILILLLISVTVGFAS) traverse the membrane as a helical segment. Residues 69-360 (GYMYGNRLKT…ENERDSSIID (292 aa)) are Cytoplasmic-facing. The 53-residue stretch at 74 to 126 (NRLKTRIDTLIESILTFENGNFAYRIPPLGDDEIGLAADQLNEMAKRVELQVA) folds into the HAMP domain. The 194-residue stretch at 153–346 (RLARDLHDAV…QIEVKVPIFP (194 aa)) folds into the Histidine kinase domain. H159 carries the post-translational modification Phosphohistidine; by autocatalysis.

Its subcellular location is the cell membrane. The enzyme catalyses ATP + protein L-histidine = ADP + protein N-phospho-L-histidine.. Functionally, member of the two-component regulatory system LiaS/LiaR probably involved in response to a subset of cell wall-active antibiotics that interfere with the lipid II cycle in the cytoplasmic membrane (bacitracin, nisin, ramoplanin and vancomycin). Also seems to be involved in response to cationic antimicrobial peptides and secretion stress. Activates probably LiaR by phosphorylation. The protein is Sensor histidine kinase LiaS (liaS) of Bacillus subtilis (strain 168).